The sequence spans 92 residues: Small ribosomal subunit protein uS19 (92 aa).

The protein belongs to the universal ribosomal protein uS19 family.

Functionally, protein S19 forms a complex with S13 that binds strongly to the 16S ribosomal RNA. This Proteus mirabilis (strain HI4320) protein is Small ribosomal subunit protein uS19.